The sequence spans 358 residues: Capsid protein VP1/VP2 (358 aa).

Residues 1–15 (MADSTSMDHDGEQRG) show a composition bias toward basic and acidic residues. A disordered region spans residues 1-37 (MADSTSMDHDGEQRGTKRKRDAGAGGSGAGIGKGTSN). Positions 23–33 (GAGGSGAGIGK) are enriched in gly residues.

Its subcellular location is the virion. Its function is as follows. Capsid protein self-assembles to form an icosahedral capsid with a T=1 symmetry, about 22 nm in diameter, and consisting of 60 copies of size variants of the capsid proteins, which differ in the N-terminushe capsid encapsulates the genomic ssDNA. Capsid proteins are responsible for the attachment to host cell receptors. This attachment induces virion internalization predominantly through clathrin-dependent endocytosis. This Aedes (Aedes densovirus) protein is Capsid protein VP1/VP2 (VP).